Consider the following 307-residue polypeptide: Transaldolase (307 aa).

The active-site Schiff-base intermediate with substrate is Lys-125.

It belongs to the transaldolase family. Type 1 subfamily. Homodimer.

Its subcellular location is the cytoplasm. It catalyses the reaction D-sedoheptulose 7-phosphate + D-glyceraldehyde 3-phosphate = D-erythrose 4-phosphate + beta-D-fructose 6-phosphate. Its pathway is carbohydrate degradation; pentose phosphate pathway; D-glyceraldehyde 3-phosphate and beta-D-fructose 6-phosphate from D-ribose 5-phosphate and D-xylulose 5-phosphate (non-oxidative stage): step 2/3. In terms of biological role, transaldolase is important for the balance of metabolites in the pentose-phosphate pathway. The protein is Transaldolase of Pseudomonas paraeruginosa (strain DSM 24068 / PA7) (Pseudomonas aeruginosa (strain PA7)).